Reading from the N-terminus, the 172-residue chain is Large ribosomal subunit protein uL10 (172 aa).

It belongs to the universal ribosomal protein uL10 family. In terms of assembly, part of the ribosomal stalk of the 50S ribosomal subunit. The N-terminus interacts with L11 and the large rRNA to form the base of the stalk. The C-terminus forms an elongated spine to which L12 dimers bind in a sequential fashion forming a multimeric L10(L12)X complex.

Functionally, forms part of the ribosomal stalk, playing a central role in the interaction of the ribosome with GTP-bound translation factors. The chain is Large ribosomal subunit protein uL10 from Rhodospirillum centenum (strain ATCC 51521 / SW).